Reading from the N-terminus, the 120-residue chain is MKVDRKTATHRRHQRIRRKIAGTPEQPRLAVYRSNRHIYAQVIDDVHQRTLVAASTLEAPLRSGEEGTATCEAATAVGRLVAERAKEKGITAVVFDRGGKLYHGRVKAVADAAREAGLDF.

Positions 1–22 (MKVDRKTATHRRHQRIRRKIAG) are disordered. Positions 8 to 20 (ATHRRHQRIRRKI) are enriched in basic residues.

It belongs to the universal ribosomal protein uL18 family. In terms of assembly, part of the 50S ribosomal subunit; part of the 5S rRNA/L5/L18/L25 subcomplex. Contacts the 5S and 23S rRNAs.

In terms of biological role, this is one of the proteins that bind and probably mediate the attachment of the 5S RNA into the large ribosomal subunit, where it forms part of the central protuberance. The chain is Large ribosomal subunit protein uL18 from Gloeobacter violaceus (strain ATCC 29082 / PCC 7421).